We begin with the raw amino-acid sequence, 271 residues long: Mannosyl-3-phosphoglycerate phosphatase (271 aa).

The active-site Nucleophile is Asp13. Mg(2+)-binding residues include Asp13, Asp15, and Asp214.

The protein belongs to the HAD-like hydrolase superfamily. MPGP family. Requires Mg(2+) as cofactor.

The protein resides in the cytoplasm. It carries out the reaction 2-O-(alpha-D-mannosyl)-3-phosphoglycerate + H2O = (2R)-2-O-(alpha-D-mannosyl)-glycerate + phosphate. In Escherichia coli O139:H28 (strain E24377A / ETEC), this protein is Mannosyl-3-phosphoglycerate phosphatase.